A 333-amino-acid chain; its full sequence is Ketol-acid reductoisomerase (NADP(+)) (333 aa).

A KARI N-terminal Rossmann domain is found at 1–171 (MSNDTQPTIA…GGARANIIKT (171 aa)). Residues 14–17 (YGSQ), R37, T42, and 72–75 (DMVQ) each bind NADP(+). Residue H97 is part of the active site. G123 contacts NADP(+). Residues 172 to 317 (TFKEETETDL…KKLRAKMVWL (146 aa)) enclose the KARI C-terminal knotted domain. The Mg(2+) site is built by D180, E184, E216, and E220. S241 contacts substrate.

The protein belongs to the ketol-acid reductoisomerase family. Requires Mg(2+) as cofactor.

It carries out the reaction (2R)-2,3-dihydroxy-3-methylbutanoate + NADP(+) = (2S)-2-acetolactate + NADPH + H(+). It catalyses the reaction (2R,3R)-2,3-dihydroxy-3-methylpentanoate + NADP(+) = (S)-2-ethyl-2-hydroxy-3-oxobutanoate + NADPH + H(+). The protein operates within amino-acid biosynthesis; L-isoleucine biosynthesis; L-isoleucine from 2-oxobutanoate: step 2/4. It functions in the pathway amino-acid biosynthesis; L-valine biosynthesis; L-valine from pyruvate: step 2/4. Functionally, involved in the biosynthesis of branched-chain amino acids (BCAA). Catalyzes an alkyl-migration followed by a ketol-acid reduction of (S)-2-acetolactate (S2AL) to yield (R)-2,3-dihydroxy-isovalerate. In the isomerase reaction, S2AL is rearranged via a Mg-dependent methyl migration to produce 3-hydroxy-3-methyl-2-ketobutyrate (HMKB). In the reductase reaction, this 2-ketoacid undergoes a metal-dependent reduction by NADPH to yield (R)-2,3-dihydroxy-isovalerate. In Xanthomonas campestris pv. campestris (strain 8004), this protein is Ketol-acid reductoisomerase (NADP(+)).